Consider the following 568-residue polypeptide: MVLGPEQKMSDDSVSGDHGESASLGNINPAYSNPSLSQSPGDSEEYFATYFNEKISIPEEEYSCFSFRKLWAFTGPGFLMSIAYLDPGNIESDLQSGAVAGFKLLWILLLATLVGLLLQRLAARLGVVTGLHLAEVCHRQYPKVPRVILWLMVELAIIGSDMQEVIGSAIAINLLSVGRIPLWGGVLITIADTFVFLFLDKYGLRKLEAFFGFLITIMALTFGYEYVTVKPSQSQVLKGMFVPSCSGCRTPQIEQAVGIVGAVIMPHNMYLHSALVKSRQVNRNNKQEVREANKYFFIESCIALFVSFIINVFVVSVFAEAFFGKTNEQVVEVCTNTSSPHAGLFPKDNSTLAVDIYKGGVVLGCYFGPAALYIWAVGILAAGQSSTMTGTYSGQFVMEGFLNLKWSRFARVVLTRSIAIIPTLLVAVFQDVEHLTGMNDFLNVLQSLQLPFALIPILTFTSLRPVMSDFANGLGWRIAGGILVLIICSINMYFVVVYVRDLGHVALYVVAAVVSVAYLGFVFYLGWQCLIALGMSFLDCGHTCHLGLTAQPELYLLNTMDADSLVSR.

The tract at residues 1–40 is disordered; that stretch reads MVLGPEQKMSDDSVSGDHGESASLGNINPAYSNPSLSQSP. Over 1–69 the chain is Cytoplasmic; that stretch reads MVLGPEQKMS…EEYSCFSFRK (69 aa). Over residues 8-20 the composition is skewed to basic and acidic residues; that stretch reads KMSDDSVSGDHGE. The span at 23-40 shows a compositional bias: polar residues; the sequence is SLGNINPAYSNPSLSQSP. A helical membrane pass occupies residues 70 to 90; sequence LWAFTGPGFLMSIAYLDPGNI. Residues 91 to 96 are Extracellular-facing; that stretch reads ESDLQS. Residues 97–117 traverse the membrane as a helical segment; that stretch reads GAVAGFKLLWILLLATLVGLL. Residues 118-154 are Cytoplasmic-facing; it reads LQRLAARLGVVTGLHLAEVCHRQYPKVPRVILWLMVE. A helical transmembrane segment spans residues 155-175; sequence LAIIGSDMQEVIGSAIAINLL. The Extracellular portion of the chain corresponds to 176–179; the sequence is SVGR. The helical transmembrane segment at 180–200 threads the bilayer; it reads IPLWGGVLITIADTFVFLFLD. Residues 201–208 are Cytoplasmic-facing; the sequence is KYGLRKLE. A helical membrane pass occupies residues 209–229; it reads AFFGFLITIMALTFGYEYVTV. The Extracellular portion of the chain corresponds to 230-255; sequence KPSQSQVLKGMFVPSCSGCRTPQIEQ. The helical transmembrane segment at 256–276 threads the bilayer; it reads AVGIVGAVIMPHNMYLHSALV. Over 277 to 301 the chain is Cytoplasmic; the sequence is KSRQVNRNNKQEVREANKYFFIESC. A helical membrane pass occupies residues 302–322; that stretch reads IALFVSFIINVFVVSVFAEAF. At 323-360 the chain is on the extracellular side; sequence FGKTNEQVVEVCTNTSSPHAGLFPKDNSTLAVDIYKGG. N336 and N349 each carry an N-linked (GlcNAc...) asparagine glycan. Residues 361-381 form a helical membrane-spanning segment; the sequence is VVLGCYFGPAALYIWAVGILA. Residues 382-408 are Cytoplasmic-facing; it reads AGQSSTMTGTYSGQFVMEGFLNLKWSR. A helical membrane pass occupies residues 409-429; sequence FARVVLTRSIAIIPTLLVAVF. The Extracellular segment spans residues 430-440; that stretch reads QDVEHLTGMND. Residues 441–461 form a helical membrane-spanning segment; the sequence is FLNVLQSLQLPFALIPILTFT. Residues 462–482 lie on the Cytoplasmic side of the membrane; it reads SLRPVMSDFANGLGWRIAGGI. A helical membrane pass occupies residues 483–503; it reads LVLIICSINMYFVVVYVRDLG. Residues 504 to 506 lie on the Extracellular side of the membrane; the sequence is HVA. A helical membrane pass occupies residues 507–527; sequence LYVVAAVVSVAYLGFVFYLGW. At 528-568 the chain is on the cytoplasmic side; sequence QCLIALGMSFLDCGHTCHLGLTAQPELYLLNTMDADSLVSR. The segment at 555–559 is required for early endosome targeting; it reads YLLNT. A phosphoserine mark is found at S564 and S567.

It belongs to the NRAMP family. As to quaternary structure, forms a complex with NDFIP1 and NEDD4L, in cortical neurons, in response to iron and cobalt exposure; this interaction leads to SLC11A2 ubiquitination by NEDD4L and proteasome-dependent degradation. Interacts with NDFIP1, NDFIP2 and WWP2; this interaction leads to SLC11A2 ubiquitination by WWP2 and subsequent proteasome-dependent degradation. Interacts with COX2 and TOM6 at the outer mitochondrion membrane. Interacts with ARRDC1; this interaction regulates the incorporation of SLC11A2 into extracellular vesicles through an ubiquitination-dependent mechanism. Interacts with ARRDC4; controls the incorporation of SLC11A2 into extracellular vesicles through an ubiquitination-dependent mechanism. In terms of processing, ubiquitinated by WWP2. N-glycosylated. As to expression, ubiquitously expressed. Expressed in erythroid progenitors.

The protein resides in the early endosome membrane. It is found in the apical cell membrane. It localises to the late endosome membrane. Its subcellular location is the lysosome membrane. The protein localises to the cell membrane. The protein resides in the extracellular vesicle membrane. It is found in the mitochondrion outer membrane. It localises to the golgi apparatus. Its subcellular location is the trans-Golgi network membrane. The protein localises to the recycling endosome membrane. It carries out the reaction Fe(2+)(in) + H(+)(in) = Fe(2+)(out) + H(+)(out). It catalyses the reaction Co(2+)(out) + H(+)(out) = Co(2+)(in) + H(+)(in). The catalysed reaction is Cd(2+)(out) + H(+)(out) = Cd(2+)(in) + H(+)(in). The enzyme catalyses Mn(2+)(in) + H(+)(in) = Mn(2+)(out) + H(+)(out). It carries out the reaction Zn(2+)(out) + H(+)(out) = Zn(2+)(in) + H(+)(in). It catalyses the reaction Ni(2+)(out) + H(+)(out) = Ni(2+)(in) + H(+)(in). The catalysed reaction is H(+)(in) = H(+)(out). The enzyme catalyses Fe(2+)(in) = Fe(2+)(out). In terms of biological role, proton-coupled metal ion symporter operating with a proton to metal ion stoichiometry of 1:1. Selectively transports various divalent metal cations, in decreasing affinity: Cd(2+) &gt; Fe(2+) &gt; Co(2+), Mn(2+) &gt;&gt; Zn(2+), Ni(2+), VO(2+). Essential for maintenance of iron homeostasis by modulating intestinal absorption of dietary Fe(2+) and TF-associated endosomal Fe(2+) transport in erythroid precursors and other cells. Enables Fe(2+) and Mn(2+) ion entry into mitochondria, and is thus expected to promote mitochondrial heme synthesis, iron-sulfur cluster biogenesis and antioxidant defense. Can mediate uncoupled fluxes of either protons or metal ions. This chain is Natural resistance-associated macrophage protein 2 (SLC11A2), found in Homo sapiens (Human).